Here is a 475-residue protein sequence, read N- to C-terminus: Ankyrin repeat, SAM and basic leucine zipper domain-containing protein 1 (475 aa).

The segment covering 1-10 (MAAGALRGLA) has biased composition (low complexity). Residues 1 to 23 (MAAGALRGLAVAGGGESSESEDD) are disordered. 3 positions are modified to phosphoserine: Ser17, Ser18, and Ser20. 6 ANK repeats span residues 45–74 (EKNE…SVDS), 78–107 (YGWT…NASF), 110–144 (DKQT…DPNV), 148–177 (RLMT…EVNT), 181–210 (NGYT…NKML), and 214–243 (DGKI…PLEG). Residues 272–334 (SYTAFGDLEI…KILSALKELE (63 aa)) enclose the SAM domain.

Interacts with DDX4, PIWIL1, RANBP9 and TDRD1.

Its subcellular location is the cytoplasm. In terms of biological role, plays a central role during spermatogenesis by repressing transposable elements and preventing their mobilization, which is essential for the germline integrity. Acts via the piRNA metabolic process, which mediates the repression of transposable elements during meiosis by forming complexes composed of piRNAs and Piwi proteins and governs the methylation and subsequent repression of transposons. Its association with pi-bodies suggests a participation in the primary piRNAs metabolic process. Required prior to the pachytene stage to facilitate the production of multiple types of piRNAs, including those associated with repeats involved in the regulation of retrotransposons. May act by mediating protein-protein interactions during germ cell maturation. This Otolemur garnettii (Small-eared galago) protein is Ankyrin repeat, SAM and basic leucine zipper domain-containing protein 1 (ASZ1).